The primary structure comprises 468 residues: ATP synthase subunit beta (468 aa).

155–162 (GGAGVGKT) serves as a coordination point for ATP.

It belongs to the ATPase alpha/beta chains family. In terms of assembly, F-type ATPases have 2 components, CF(1) - the catalytic core - and CF(0) - the membrane proton channel. CF(1) has five subunits: alpha(3), beta(3), gamma(1), delta(1), epsilon(1). CF(0) has three main subunits: a(1), b(2) and c(9-12). The alpha and beta chains form an alternating ring which encloses part of the gamma chain. CF(1) is attached to CF(0) by a central stalk formed by the gamma and epsilon chains, while a peripheral stalk is formed by the delta and b chains.

The protein localises to the cell membrane. The catalysed reaction is ATP + H2O + 4 H(+)(in) = ADP + phosphate + 5 H(+)(out). Produces ATP from ADP in the presence of a proton gradient across the membrane. The catalytic sites are hosted primarily by the beta subunits. The chain is ATP synthase subunit beta from Streptococcus pyogenes serotype M3 (strain ATCC BAA-595 / MGAS315).